A 222-amino-acid chain; its full sequence is ATP-dependent dethiobiotin synthetase BioD (222 aa).

12–17 (DAGKTV) serves as a coordination point for ATP. Thr16 is a binding site for Mg(2+). Lys37 is an active-site residue. Ser41 is a binding site for substrate. Residues Asp54, 116–119 (EGAG), 176–177 (VQ), 206–208 (PYL), and Glu213 each bind ATP. The Mg(2+) site is built by Asp54 and Glu116.

The protein belongs to the dethiobiotin synthetase family. Homodimer. It depends on Mg(2+) as a cofactor.

Its subcellular location is the cytoplasm. The catalysed reaction is (7R,8S)-7,8-diammoniononanoate + CO2 + ATP = (4R,5S)-dethiobiotin + ADP + phosphate + 3 H(+). The protein operates within cofactor biosynthesis; biotin biosynthesis; biotin from 7,8-diaminononanoate: step 1/2. Functionally, catalyzes a mechanistically unusual reaction, the ATP-dependent insertion of CO2 between the N7 and N8 nitrogen atoms of 7,8-diaminopelargonic acid (DAPA, also called 7,8-diammoniononanoate) to form a ureido ring. The protein is ATP-dependent dethiobiotin synthetase BioD of Idiomarina loihiensis (strain ATCC BAA-735 / DSM 15497 / L2-TR).